The sequence spans 128 residues: NADH dehydrogenase [ubiquinone] 1 beta subcomplex subunit 6 (128 aa).

At Ser-2 the chain carries N-acetylserine. Lys-24 bears the N6-acetyllysine mark. The helical transmembrane segment at 64 to 86 (TYRHSIFAFTHVLIPVWIIHYYL) threads the bilayer.

Belongs to the complex I NDUFB6 subunit family. Complex I is composed of 45 different subunits.

The protein resides in the mitochondrion inner membrane. Accessory subunit of the mitochondrial membrane respiratory chain NADH dehydrogenase (Complex I), that is believed not to be involved in catalysis. Complex I functions in the transfer of electrons from NADH to the respiratory chain. The immediate electron acceptor for the enzyme is believed to be ubiquinone. This chain is NADH dehydrogenase [ubiquinone] 1 beta subcomplex subunit 6 (NDUFB6), found in Bos taurus (Bovine).